The primary structure comprises 75 residues: Protein Tlp homolog (75 aa).

This sequence belongs to the Tlp family.

The chain is Protein Tlp homolog from Clostridium acetobutylicum (strain ATCC 824 / DSM 792 / JCM 1419 / IAM 19013 / LMG 5710 / NBRC 13948 / NRRL B-527 / VKM B-1787 / 2291 / W).